The following is a 298-amino-acid chain: NFU1 iron-sulfur cluster scaffold homolog, mitochondrial (298 aa).

A nifU region spans residues 190-258 (IKELLDTRIR…IPEVESVEQV (69 aa)). Positions 227 and 230 each coordinate [4Fe-4S] cluster. Over residues 279–288 (QKESVNQPNA) the composition is skewed to polar residues. The tract at residues 279 to 298 (QKESVNQPNAPVNIGGGTPN) is disordered.

Belongs to the NifU family.

Its subcellular location is the mitochondrion. Functionally, molecular scaffold for [Fe-S] cluster assembly of mitochondrial iron-sulfur proteins. The polypeptide is NFU1 iron-sulfur cluster scaffold homolog, mitochondrial (Drosophila virilis (Fruit fly)).